The chain runs to 1406 residues: Enhancer of mRNA-decapping protein 4 (1406 aa).

Ala-2 carries the post-translational modification N-acetylalanine. Residues Ser-3 and Ser-6 each carry the phosphoserine modification. Lys-125 carries the post-translational modification N6-acetyllysine. WD repeat units lie at residues 174–214 (GFTG…GKIQ), 230–277 (NHFR…SSHN), 295–334 (GHST…QDEP), and 342–393 (PHDG…CLQT). Phosphoserine is present on residues Ser-560, Ser-565, Ser-583, and Ser-585. Disordered stretches follow at residues 604 to 631 (SLQQ…SSSS) and 667 to 686 (SLTL…SLLP). A compositionally biased stretch (low complexity) spans 609-631 (SASPSSSSSSSSSSSSSSSSSSS). 4 positions are modified to phosphoserine: Ser-680, Ser-712, Ser-727, and Ser-729. The segment at 719–744 (EPLGLPQASPSRTRSPDVISSASTAL) is disordered. Polar residues predominate over residues 726–744 (ASPSRTRSPDVISSASTAL). Residue Thr-731 is modified to Phosphothreonine. A phosphoserine mark is found at Ser-733 and Ser-745. 2 disordered regions span residues 782 to 855 (HLLS…NGLQ) and 873 to 951 (QRDS…VAEP). Composition is skewed to polar residues over residues 823–832 (EVATPDSQVW) and 841–852 (ETCSTLTESPRN). Thr-826 carries the post-translational modification Phosphothreonine. Phosphoserine occurs at positions 849 and 876. Phosphothreonine is present on Thr-879. Phosphoserine occurs at positions 880, 884, 892, 895, and 897. Position 906 is a phosphothreonine (Thr-906). Positions 971 to 1030 (HNQEELLQRLCAQLEGLQSTVTDHVERALETRHEQEQRRLERALAEGQQRGGQLQEQLTQ) form a coiled coil. A Phosphoserine modification is found at Ser-1385.

The protein belongs to the WD repeat EDC4 family. Part of a decapping complex consisting of DCP1A, DCP2, EDC3, EDC4 and probably DDX6. Part of a complex consisting of DCP1A, EDC3, EDC4 and DDX6. Part of a complex consisting of DCP1B, EDC3, EDC4 and DDX6. Interacts with DCP2. Interacts with RC3H1. Interacts with NBDY. Interacts with Tex19.1 and, probably, Tex19.2. Interacts with LSM14A. Interacts with DDX6.

It localises to the cytoplasm. It is found in the P-body. The protein localises to the nucleus. In the process of mRNA degradation, seems to play a role in mRNA decapping. Component of a complex containing DCP2 and DCP1A which functions in decapping of ARE-containing mRNAs. Promotes complex formation between DCP1A and DCP2. Enhances the catalytic activity of DCP2 (in vitro). The sequence is that of Enhancer of mRNA-decapping protein 4 from Mus musculus (Mouse).